The primary structure comprises 261 residues: Chanoclavine-I dehydrogenase easD (261 aa).

The signal sequence occupies residues 1-20; the sequence is MPSMTSKVFAITGGASGIGA. Ile18 provides a ligand contact to NADP(+). Asn43 carries an N-linked (GlcNAc...) asparagine glycan. Residues Asp66, Arg132, Tyr166, Lys170, and Thr201 each contribute to the NADP(+) site. Tyr166 (proton donor) is an active-site residue. Catalysis depends on Lys170, which acts as the Lowers pKa of active site Tyr.

The protein belongs to the short-chain dehydrogenases/reductases (SDR) family. Homotetramer.

It catalyses the reaction chanoclavine-I + NAD(+) = chanoclavine-I aldehyde + NADH + H(+). It functions in the pathway alkaloid biosynthesis; ergot alkaloid biosynthesis. Chanoclavine-I dehydrogenase; part of the gene cluster that mediates the biosynthesis of fungal ergot alkaloid. DmaW catalyzes the first step of ergot alkaloid biosynthesis by condensing dimethylallyl diphosphate (DMAP) and tryptophan to form 4-dimethylallyl-L-tryptophan. The second step is catalyzed by the methyltransferase easF that methylates 4-dimethylallyl-L-tryptophan in the presence of S-adenosyl-L-methionine, resulting in the formation of 4-dimethylallyl-L-abrine. The catalase easC and the FAD-dependent oxidoreductase easE then transform 4-dimethylallyl-L-abrine to chanoclavine-I which is further oxidized by easD in the presence of NAD(+), resulting in the formation of chanoclavine-I aldehyde. Agroclavine dehydrogenase easG then mediates the conversion of chanoclavine-I aldehyde to agroclavine via a non-enzymatic adduct reaction: the substrate is an iminium intermediate that is formed spontaneously from chanoclavine-I aldehyde in the presence of glutathione. The presence of easA is not required to complete this reaction. Further conversion of agroclavine to paspalic acid is a two-step process involving oxidation of agroclavine to elymoclavine and of elymoclavine to paspalic acid, the second step being performed by the elymoclavine oxidase cloA. Paspalic acid is then further converted to D-lysergic acid. Ergopeptines are assembled from D-lysergic acid and three different amino acids by the D-lysergyl-peptide-synthetases composed each of a monomudular and a trimodular nonribosomal peptide synthetase subunit. LpsB and lpsC encode the monomodular subunits responsible for D-lysergic acid activation and incorporation into the ergopeptine backbone. LpsA1 and A2 subunits encode the trimodular nonribosomal peptide synthetase assembling the tripeptide portion of ergopeptines. LpsA1 is responsible for formation of the major ergopeptine, ergotamine, and lpsA2 for alpha-ergocryptine, the minor ergopeptine of the total alkaloid mixture elaborated by C.purpurea. D-lysergyl-tripeptides are assembled by the nonribosomal peptide synthetases and released as N-(D-lysergyl-aminoacyl)-lactams. Cyclolization of the D-lysergyl-tripeptides is performed by the Fe(2+)/2-ketoglutarate-dependent dioxygenase easH which introduces a hydroxyl group into N-(D-lysergyl-aminoacyl)-lactam at alpha-C of the aminoacyl residue followed by spontaneous condensation with the terminal lactam carbonyl group. This is Chanoclavine-I dehydrogenase easD from Claviceps purpurea (strain 20.1) (Ergot fungus).